We begin with the raw amino-acid sequence, 313 residues long: Intelectin-1a (313 aa).

The first 18 residues, 1–18, serve as a signal peptide directing secretion; that stretch reads MTQLGFLLFIMVATRGCS. The 220-residue stretch at 32-251 folds into the Fibrinogen C-terminal domain; it reads SFFSSLPRSC…NNERAASALC (220 aa). C41 and C70 are disulfide-bonded. 7 residues coordinate Ca(2+): H86, E87, N89, G92, G97, D98, and D133. Cystine bridges form between C94-C280, C199-C259, and C251-C265. The Ca(2+) site is built by N260, E262, E274, and D282. A carbohydrate is bound by residues 262–263 and E274; that span reads EH. Residue S298 is the site of GPI-anchor amidated serine attachment. Residues 299 to 313 constitute a propeptide that is removed on maturation; the sequence is SSRKITEAAVLLFYR.

Monomer. May interact with LTF. Expressed in small intestinal Paneth cells in uninfected mice. Expression also detected in various other tissues including stomach, kidney, ovary and brain.

The protein resides in the cell membrane. Its subcellular location is the secreted. In terms of biological role, lectin that specifically recognizes microbial carbohydrate chains in a calcium-dependent manner. Binds to microbial glycans that contain a terminal acyclic 1,2-diol moiety, including beta-linked D-galactofuranose (beta-Galf), D-phosphoglycerol-modified glycans, D-glycero-D-talo-oct-2-ulosonic acid (KO) and 3-deoxy-D-manno-oct-2-ulosonic acid (KDO). Binds to glycans from Gram-positive and Gram-negative bacteria, including K.pneumoniae, S.pneumoniae, Y.pestis, P.mirabilis and P.vulgaris. Does not bind mammalian glycans. Probably plays a role in the defense system against microorganisms. May function as adipokine that has no effect on basal glucose uptake but enhances insulin-stimulated glucose uptake in adipocytes. Increases AKT phosphorylation in the absence and presence of insulin. May interact with lactoferrin/LTF and increase its uptake, and may thereby play a role in iron absorption. This Mus musculus (Mouse) protein is Intelectin-1a (Itln1).